The following is a 207-amino-acid chain: 3-isopropylmalate dehydratase small subunit (207 aa).

Belongs to the LeuD family. LeuD type 1 subfamily. In terms of assembly, heterodimer of LeuC and LeuD.

It carries out the reaction (2R,3S)-3-isopropylmalate = (2S)-2-isopropylmalate. It participates in amino-acid biosynthesis; L-leucine biosynthesis; L-leucine from 3-methyl-2-oxobutanoate: step 2/4. Catalyzes the isomerization between 2-isopropylmalate and 3-isopropylmalate, via the formation of 2-isopropylmaleate. In Buchnera aphidicola subsp. Pterocomma populeum, this protein is 3-isopropylmalate dehydratase small subunit (leuD).